Reading from the N-terminus, the 99-residue chain is Biogenesis of lysosome-related organelles complex 1 subunit SNN1 (99 aa).

Positions 34 to 94 (SINELRESQA…VVLKRYEKMV (61 aa)) form a coiled coil.

The protein belongs to the SNAPIN family. In terms of assembly, component of the biogenesis of lysosome-related organelles complex-1 (BLOC-1).

It is found in the endosome. Component of the biogenesis of lysosome-related organelles complex-1 (BLOC-1), a complex involved in endosomal cargo sorting. In Kluyveromyces lactis (strain ATCC 8585 / CBS 2359 / DSM 70799 / NBRC 1267 / NRRL Y-1140 / WM37) (Yeast), this protein is Biogenesis of lysosome-related organelles complex 1 subunit SNN1 (SNN1).